Reading from the N-terminus, the 146-residue chain is Deoxyuridine 5'-triphosphate nucleotidohydrolase (146 aa).

Residues 65 to 67, asparagine 78, 82 to 84, and methionine 92 each bind substrate; these read RSG and LID.

It belongs to the dUTPase family. Mg(2+) is required as a cofactor.

The enzyme catalyses dUTP + H2O = dUMP + diphosphate + H(+). The protein operates within pyrimidine metabolism; dUMP biosynthesis; dUMP from dCTP (dUTP route): step 2/2. Its function is as follows. This enzyme is involved in nucleotide metabolism: it produces dUMP, the immediate precursor of thymidine nucleotides and it decreases the intracellular concentration of dUTP so that uracil cannot be incorporated into DNA. In Thiobacillus denitrificans (strain ATCC 25259 / T1), this protein is Deoxyuridine 5'-triphosphate nucleotidohydrolase.